A 184-amino-acid chain; its full sequence is UPF0302 protein OB1778 (184 aa).

This sequence belongs to the UPF0302 family.

The sequence is that of UPF0302 protein OB1778 from Oceanobacillus iheyensis (strain DSM 14371 / CIP 107618 / JCM 11309 / KCTC 3954 / HTE831).